A 593-amino-acid chain; its full sequence is Double-stranded RNA-binding protein 2 (593 aa).

DRBM domains are found at residues 1–70 (MYKN…ELSK) and 87–155 (IYKN…ELKQ). Residues 188 to 197 (LNQTNGGKTP) show a composition bias toward polar residues. Disordered regions lie at residues 188–221 (LNQTNGGKTPQQKEKQQSSNRPSSRRPSYPKSNA), 357–408 (APDF…ESNQ), and 546–593 (VNSS…KLHI). The span at 205 to 219 (SSNRPSSRRPSYPKS) shows a compositional bias: low complexity. Over residues 378–408 (ESSPASEQESKSHTASSSATRSPSQQLESNQ) the composition is skewed to polar residues. A compositionally biased stretch (low complexity) spans 572–586 (RTNTSDTSNAATASS).

In terms of biological role, binds double-stranded RNA. The polypeptide is Double-stranded RNA-binding protein 2 (DRB2) (Oryza sativa subsp. japonica (Rice)).